The chain runs to 764 residues: 5-methyltetrahydropteroyltriglutamate--homocysteine methyltransferase (764 aa).

5-methyltetrahydropteroyltri-L-glutamate is bound by residues 16–19 (RELK) and Lys-121. L-homocysteine is bound by residues 440–442 (IGS) and Glu-493. Residues 440–442 (IGS) and Glu-493 contribute to the L-methionine site. 5-methyltetrahydropteroyltri-L-glutamate is bound by residues 524–525 (RC) and Trp-570. Residue Asp-608 participates in L-homocysteine binding. L-methionine is bound at residue Asp-608. Residue Glu-614 participates in 5-methyltetrahydropteroyltri-L-glutamate binding. Positions 650, 652, and 674 each coordinate Zn(2+). The active-site Proton donor is the His-703. Residue Cys-735 participates in Zn(2+) binding.

Belongs to the vitamin-B12 independent methionine synthase family. Zn(2+) serves as cofactor.

It carries out the reaction 5-methyltetrahydropteroyltri-L-glutamate + L-homocysteine = tetrahydropteroyltri-L-glutamate + L-methionine. It participates in amino-acid biosynthesis; L-methionine biosynthesis via de novo pathway; L-methionine from L-homocysteine (MetE route): step 1/1. Its function is as follows. Catalyzes the transfer of a methyl group from 5-methyltetrahydrofolate to homocysteine resulting in methionine formation. In Burkholderia ambifaria (strain ATCC BAA-244 / DSM 16087 / CCUG 44356 / LMG 19182 / AMMD) (Burkholderia cepacia (strain AMMD)), this protein is 5-methyltetrahydropteroyltriglutamate--homocysteine methyltransferase.